A 162-amino-acid chain; its full sequence is 2-C-methyl-D-erythritol 2,4-cyclodiphosphate synthase (162 aa).

2 residues coordinate a divalent metal cation: aspartate 9 and histidine 11. Residues 9-11 and 37-38 each bind 4-CDP-2-C-methyl-D-erythritol 2-phosphate; these read DFH and HS. Residue histidine 45 participates in a divalent metal cation binding. 4-CDP-2-C-methyl-D-erythritol 2-phosphate-binding positions include 59–61, 64–68, 135–138, and arginine 145; these read DIG, FPDTD, and TTSE.

It belongs to the IspF family. As to quaternary structure, homotrimer. Requires a divalent metal cation as cofactor.

It catalyses the reaction 4-CDP-2-C-methyl-D-erythritol 2-phosphate = 2-C-methyl-D-erythritol 2,4-cyclic diphosphate + CMP. Its pathway is isoprenoid biosynthesis; isopentenyl diphosphate biosynthesis via DXP pathway; isopentenyl diphosphate from 1-deoxy-D-xylulose 5-phosphate: step 4/6. Its function is as follows. Involved in the biosynthesis of isopentenyl diphosphate (IPP) and dimethylallyl diphosphate (DMAPP), two major building blocks of isoprenoid compounds. Catalyzes the conversion of 4-diphosphocytidyl-2-C-methyl-D-erythritol 2-phosphate (CDP-ME2P) to 2-C-methyl-D-erythritol 2,4-cyclodiphosphate (ME-CPP) with a corresponding release of cytidine 5-monophosphate (CMP). The protein is 2-C-methyl-D-erythritol 2,4-cyclodiphosphate synthase of Leptospira biflexa serovar Patoc (strain Patoc 1 / Ames).